Reading from the N-terminus, the 392-residue chain is Obg-like ATPase 1 (392 aa).

The 265-residue stretch at 21–285 (LKTGIVGMPN…FTEEEAIEEC (265 aa)) folds into the OBG-type G domain. ATP is bound at residue 30–35 (NVGKST). Serine 34 and threonine 55 together coordinate Mg(2+). ATP is bound at residue methionine 233. Positions 306 to 389 (NLINYFTCGE…ESGDIAHWKA (84 aa)) constitute a TGS domain.

This sequence belongs to the TRAFAC class OBG-HflX-like GTPase superfamily. OBG GTPase family. YchF/OLA1 subfamily. As to quaternary structure, monomer. The cofactor is Mg(2+).

The protein resides in the cytoplasm. It is found in the nucleus. In terms of biological role, hydrolyzes ATP, and can also hydrolyze GTP with lower efficiency. Has lower affinity for GTP. Negatively regulates the G2/M transition in the cell cycle. The polypeptide is Obg-like ATPase 1 (Schizosaccharomyces pombe (strain 972 / ATCC 24843) (Fission yeast)).